The following is a 118-amino-acid chain: Secreted RxLR effector protein 143 (118 aa).

The N-terminal stretch at 1–18 is a signal peptide; it reads MRHCAFLFRLFLIGYSCS. Residues 35–65 are compositionally biased toward basic and acidic residues; the sequence is DELPRAEQWDSDGKRILQADDPEHIPTEERG. Residues 35-66 are disordered; it reads DELPRAEQWDSDGKRILQADDPEHIPTEERGI. Positions 49 to 64 match the RxLR-dEER motif; the sequence is RILQADDPEHIPTEER.

This sequence belongs to the RxLR effector family.

It is found in the secreted. The protein localises to the host cell membrane. Its function is as follows. Secreted effector that completely suppresses the host cell death induced by cell death-inducing proteins. This is Secreted RxLR effector protein 143 from Plasmopara viticola (Downy mildew of grapevine).